The primary structure comprises 632 residues: 1-deoxy-D-xylulose-5-phosphate synthase (632 aa).

Residues His72 and 113–115 contribute to the thiamine diphosphate site; that span reads GHA. Asp144 provides a ligand contact to Mg(2+). Thiamine diphosphate-binding positions include 145–146, Asn174, Tyr285, and Glu368; that span reads GA. Asn174 contributes to the Mg(2+) binding site.

Belongs to the transketolase family. DXPS subfamily. As to quaternary structure, homodimer. It depends on Mg(2+) as a cofactor. The cofactor is thiamine diphosphate.

The catalysed reaction is D-glyceraldehyde 3-phosphate + pyruvate + H(+) = 1-deoxy-D-xylulose 5-phosphate + CO2. The protein operates within metabolic intermediate biosynthesis; 1-deoxy-D-xylulose 5-phosphate biosynthesis; 1-deoxy-D-xylulose 5-phosphate from D-glyceraldehyde 3-phosphate and pyruvate: step 1/1. In terms of biological role, catalyzes the acyloin condensation reaction between C atoms 2 and 3 of pyruvate and glyceraldehyde 3-phosphate to yield 1-deoxy-D-xylulose-5-phosphate (DXP). The protein is 1-deoxy-D-xylulose-5-phosphate synthase of Cyanothece sp. (strain PCC 7425 / ATCC 29141).